The sequence spans 728 residues: Catalase-peroxidase (728 aa).

A signal peptide spans 1–19; that stretch reads MSTEAKCPVTGGATRSSSA. Positions 1 to 20 are disordered; the sequence is MSTEAKCPVTGGATRSSSAG. Residues 96-219 constitute a cross-link (tryptophyl-tyrosyl-methioninium (Trp-Tyr) (with M-245)); it reads WHAAGTYRIG…LAAVQMGLIY (124 aa). Residue His-97 is the Proton acceptor of the active site. Residues 219 to 245 constitute a cross-link (tryptophyl-tyrosyl-methioninium (Tyr-Met) (with W-96)); that stretch reads YVNPEGPNGKPDPVAAARDIRETFARM. Residue His-260 participates in heme b binding.

Belongs to the peroxidase family. Peroxidase/catalase subfamily. Homodimer or homotetramer. Heme b serves as cofactor. In terms of processing, formation of the three residue Trp-Tyr-Met cross-link is important for the catalase, but not the peroxidase activity of the enzyme.

The enzyme catalyses H2O2 + AH2 = A + 2 H2O. It carries out the reaction 2 H2O2 = O2 + 2 H2O. In terms of biological role, bifunctional enzyme with both catalase and broad-spectrum peroxidase activity. This is Catalase-peroxidase from Acidiphilium cryptum (strain JF-5).